The chain runs to 342 residues: Phosphate acyltransferase (342 aa).

This sequence belongs to the PlsX family. As to quaternary structure, homodimer. Probably interacts with PlsY.

It is found in the cytoplasm. The catalysed reaction is a fatty acyl-[ACP] + phosphate = an acyl phosphate + holo-[ACP]. It participates in lipid metabolism; phospholipid metabolism. Its function is as follows. Catalyzes the reversible formation of acyl-phosphate (acyl-PO(4)) from acyl-[acyl-carrier-protein] (acyl-ACP). This enzyme utilizes acyl-ACP as fatty acyl donor, but not acyl-CoA. The sequence is that of Phosphate acyltransferase from Shewanella sp. (strain ANA-3).